The primary structure comprises 131 residues: Sulfurtransferase TusD (131 aa).

The Cysteine persulfide intermediate role is filled by Cys-81.

The protein belongs to the DsrE/TusD family. Heterohexamer, formed by a dimer of trimers. The hexameric TusBCD complex contains 2 copies each of TusB, TusC and TusD. The TusBCD complex interacts with TusE.

It localises to the cytoplasm. Its function is as follows. Part of a sulfur-relay system required for 2-thiolation of 5-methylaminomethyl-2-thiouridine (mnm(5)s(2)U) at tRNA wobble positions. Accepts sulfur from TusA and transfers it in turn to TusE. This is Sulfurtransferase TusD from Photorhabdus laumondii subsp. laumondii (strain DSM 15139 / CIP 105565 / TT01) (Photorhabdus luminescens subsp. laumondii).